Here is a 96-residue protein sequence, read N- to C-terminus: Aspartyl/glutamyl-tRNA(Asn/Gln) amidotransferase subunit C (96 aa).

It belongs to the GatC family. In terms of assembly, heterotrimer of A, B and C subunits.

It catalyses the reaction L-glutamyl-tRNA(Gln) + L-glutamine + ATP + H2O = L-glutaminyl-tRNA(Gln) + L-glutamate + ADP + phosphate + H(+). The enzyme catalyses L-aspartyl-tRNA(Asn) + L-glutamine + ATP + H2O = L-asparaginyl-tRNA(Asn) + L-glutamate + ADP + phosphate + 2 H(+). In terms of biological role, allows the formation of correctly charged Asn-tRNA(Asn) or Gln-tRNA(Gln) through the transamidation of misacylated Asp-tRNA(Asn) or Glu-tRNA(Gln) in organisms which lack either or both of asparaginyl-tRNA or glutaminyl-tRNA synthetases. The reaction takes place in the presence of glutamine and ATP through an activated phospho-Asp-tRNA(Asn) or phospho-Glu-tRNA(Gln). The sequence is that of Aspartyl/glutamyl-tRNA(Asn/Gln) amidotransferase subunit C from Deinococcus deserti (strain DSM 17065 / CIP 109153 / LMG 22923 / VCD115).